The primary structure comprises 279 residues: Apolipoprotein L domain-containing protein 1 (279 aa).

Helical transmembrane passes span 83-105 (SLVA…IVGL), 122-142 (GLGV…SLIF), and 192-212 (IALY…FLIP). Positions 226 to 253 (LKAKIQKLAESLESCTGALDELSEQLES) form a coiled coil.

Belongs to the apolipoprotein L family. As to expression, expressed in neonatal dermal microvascular endothelial cells.

Its subcellular location is the cell membrane. It is found in the cell junction. The protein resides in the cytoplasmic vesicle. It localises to the secretory vesicle. In terms of biological role, is a modulator of endothelial barrier permeability, required for proper organization of endothelial cell-cell junctions and cytoskeleton. It also plays a role in the modulation of secretory autophagy. May affect blood-brain barrier permeability. The polypeptide is Apolipoprotein L domain-containing protein 1 (APOLD1) (Homo sapiens (Human)).